Here is a 435-residue protein sequence, read N- to C-terminus: Indole diterpene prenyltransferase atmD (435 aa).

L-tryptophan is bound by residues 81 to 82 and glutamate 90; that span reads AY. The substrate site is built by arginine 103, lysine 190, arginine 261, lysine 263, tyrosine 265, tyrosine 346, and tyrosine 413.

Belongs to the tryptophan dimethylallyltransferase family.

In terms of biological role, indole diterpene prenyltransferase; part of the ATM2 gene cluster that mediates the biosynthesis of aflatrem, a tremorgenic mycotoxin with acute neurotoxic effects. Synthesis of geranylgeranyl diphosphate (GGPP) by AtmG (a GGPP synthase) precedes condensation of GGPP with indole 3-glycerol phosphate, followed by epoxidation and cyclization by AtmM (a FAD-dependent monooxygenase) and AtmC (a prenyltransferase) to produce paspaline. AtmB is also essential for paspaline production, but its exact role has not been identified yet. AtmP, a cytochrome P450 monooxygenase, subsequently converts paspaline to 13-desoxypaxilline via PC-M6 by removal of the C-30 methyl group and oxidation at C-10. AtmQ, a cytochrome P450 monooxygenase, then catalyzes the oxidation of 13-desoxypaxilline, first at C-7 to produce paspalicine and then at C-13 to form paspalinine. Finally, AtmD prenylates paspalinine to form aflatrem. In Aspergillus flavus, this protein is Indole diterpene prenyltransferase atmD.